We begin with the raw amino-acid sequence, 115 residues long: LQIALQTKIKLFYRPAAIKTRPNEVWQDQLILNKVSGGYRIENPTPYYVTVIGLGGSEKQAEEGEFETVMLSPRSEQTVNRNYNTPYLSYINDYGGRPVLSFICNGSRCSVKKEK.

The protein belongs to the periplasmic pilus chaperone family.

The protein localises to the periplasm. In terms of biological role, mediates assembly of pili by forming soluble multimeric complexes with pili subunits as an intermediate step in the assembly process. This chain is Chaperone protein PrsD (prsD), found in Escherichia coli.